We begin with the raw amino-acid sequence, 381 residues long: MIISASTDYRAAAQRKLPPFLFHYADGGAYAEHTLRHNVSDLAGIALRQRVLKNMSELSLETRLFDETLSMPVALAPVGLTGMYARRGEVQAARAAAAHGIPFTMSTVSVCPIEEVAPAIDRPMWFQLYVLKDRGFMRNALERAKAAGVKTLVFTVDMPVPGARYRDAHSGMSGANGPMRRVLQAMTHPEWAWDVGVMGRPHDLGNISKYRGNPTGLADYIGWLGSNFDPSISWKDLEWIREFWDGPMIIKGILDADDARDAVKFGADGIVVSNHGGRQLDGVLSSARALPAIADAVKGDLKILADSGIRSGLDVVRMIALGADTVLIGRAFLWALAVHGQAGVKNLLELFEKEMRVAMVLTGAKAISEISRDSLVRELGA.

In terms of domain architecture, FMN hydroxy acid dehydrogenase spans 1-380 (MIISASTDYR…SRDSLVRELG (380 aa)). Residue tyrosine 24 participates in substrate binding. FMN is bound by residues serine 106 and glutamine 127. Tyrosine 129 lines the substrate pocket. Threonine 155 contributes to the FMN binding site. Arginine 164 is a substrate binding site. Position 251 (lysine 251) interacts with FMN. Residue histidine 275 is the Proton acceptor of the active site. A substrate-binding site is contributed by arginine 278. Residue 306-330 (DSGIRSGLDVVRMIALGADTVLIGR) coordinates FMN.

The protein belongs to the FMN-dependent alpha-hydroxy acid dehydrogenase family. In terms of assembly, homotetramer. Requires FMN as cofactor.

The protein localises to the cell inner membrane. It carries out the reaction (S)-lactate + A = pyruvate + AH2. Catalyzes the conversion of L-lactate to pyruvate. Is coupled to the respiratory chain. The protein is L-lactate dehydrogenase of Pseudomonas putida (strain W619).